The sequence spans 767 residues: Probable beta-glucosidase K (767 aa).

N19 is a glycosylation site (N-linked (GlcNAc...) asparagine). D232 is an active-site residue. N-linked (GlcNAc...) asparagine glycosylation is found at N324, N477, and N749. Residues 405-552 form the PA14 domain; that stretch reads EGQPGLRMRF…DPERAIARAV (148 aa). Positions 727-767 are disordered; that stretch reads LGRRGRSGSSPAVYRGRSNNVVNRTSHQGAQRISKGGFAAR. The span at 743 to 757 shows a compositional bias: polar residues; the sequence is RSNNVVNRTSHQGAQ.

The protein belongs to the glycosyl hydrolase 3 family.

Its subcellular location is the secreted. The enzyme catalyses Hydrolysis of terminal, non-reducing beta-D-glucosyl residues with release of beta-D-glucose.. Its pathway is glycan metabolism; cellulose degradation. In terms of biological role, beta-glucosidases are one of a number of cellulolytic enzymes involved in the degradation of cellulosic biomass. Catalyzes the last step releasing glucose from the inhibitory cellobiose. This chain is Probable beta-glucosidase K (bglK), found in Aspergillus fumigatus (strain ATCC MYA-4609 / CBS 101355 / FGSC A1100 / Af293) (Neosartorya fumigata).